The sequence spans 405 residues: Tryptophan synthase beta chain (405 aa).

Lys98 bears the N6-(pyridoxal phosphate)lysine mark.

Belongs to the TrpB family. Tetramer of two alpha and two beta chains. It depends on pyridoxal 5'-phosphate as a cofactor.

The enzyme catalyses (1S,2R)-1-C-(indol-3-yl)glycerol 3-phosphate + L-serine = D-glyceraldehyde 3-phosphate + L-tryptophan + H2O. The protein operates within amino-acid biosynthesis; L-tryptophan biosynthesis; L-tryptophan from chorismate: step 5/5. Functionally, the beta subunit is responsible for the synthesis of L-tryptophan from indole and L-serine. This is Tryptophan synthase beta chain from Xylella fastidiosa (strain M12).